We begin with the raw amino-acid sequence, 278 residues long: Short-chain dehydrogenase RED2 (278 aa).

Residues Ile-15, Asp-70, Arg-132, Tyr-178, Lys-182, Val-211, and Thr-213 each coordinate NADP(+). Tyr-178 functions as the Proton donor in the catalytic mechanism. Catalysis depends on Lys-182, which acts as the Lowers pKa of active site Tyr.

This sequence belongs to the short-chain dehydrogenases/reductases (SDR) family.

The protein operates within polyketide biosynthesis. Short-chain dehydrogenase; part of the gene cluster that mediates the biosynthesis of pyriculol and pyriculariol, two heptaketides that induce lesion formation upon application on rice leaves but are dispensable for pathogenicity. The highly reducing polyketide synthase synthesizes the heptaketide backbone of pyriculol and pyriculariol. Pyriculol and pyriculariol contain several hydroxyl moieties and double bonds, so it can be assumed that several reduction steps occur during biosynthesis. These reactions could be executed by PKS19 itself or partly by the tailoring enzymes OXR1, OXR2, RED1, RED2 or RED3, identified within the cluster. The FAD-linked oxidoreductase OXR1 is the only tailoring enzyme for which the function has been determined yet, and is involved in the oxidation of dihydropyriculol and dihydropyriculariol into pyriculol and pyriculariol, respectively. The chain is Short-chain dehydrogenase RED2 from Pyricularia oryzae (strain 70-15 / ATCC MYA-4617 / FGSC 8958) (Rice blast fungus).